Here is a 230-residue protein sequence, read N- to C-terminus: Biosynthetic peptidoglycan transglycosylase (230 aa).

A helical membrane pass occupies residues Ile10–Val30.

The protein belongs to the glycosyltransferase 51 family.

It localises to the cell inner membrane. It catalyses the reaction [GlcNAc-(1-&gt;4)-Mur2Ac(oyl-L-Ala-gamma-D-Glu-L-Lys-D-Ala-D-Ala)](n)-di-trans,octa-cis-undecaprenyl diphosphate + beta-D-GlcNAc-(1-&gt;4)-Mur2Ac(oyl-L-Ala-gamma-D-Glu-L-Lys-D-Ala-D-Ala)-di-trans,octa-cis-undecaprenyl diphosphate = [GlcNAc-(1-&gt;4)-Mur2Ac(oyl-L-Ala-gamma-D-Glu-L-Lys-D-Ala-D-Ala)](n+1)-di-trans,octa-cis-undecaprenyl diphosphate + di-trans,octa-cis-undecaprenyl diphosphate + H(+). The protein operates within cell wall biogenesis; peptidoglycan biosynthesis. Functionally, peptidoglycan polymerase that catalyzes glycan chain elongation from lipid-linked precursors. The sequence is that of Biosynthetic peptidoglycan transglycosylase from Nitrosospira multiformis (strain ATCC 25196 / NCIMB 11849 / C 71).